A 747-amino-acid chain; its full sequence is Histone-lysine N-methyltransferase EZH1 (747 aa).

The interval 186–229 is disordered; that stretch reads YSDEDEEGHNDTSDGKQDDSKEDLPVTRKRKRHAIEGSKKSSKK. A compositionally biased stretch (basic and acidic residues) spans 194–211; sequence HNDTSDGKQDDSKEDLPV. Lys327 is covalently cross-linked (Glycyl lysine isopeptide (Lys-Gly) (interchain with G-Cter in SUMO2)). Positions 375 to 421 are disordered; that stretch reads TSASAVAETKEGDSDRDTGNDWASSSSEANSRCQTPTKQKASPAPPQ. Residues 382 to 393 show a composition bias toward basic and acidic residues; that stretch reads ETKEGDSDRDTG. Residues 395–414 show a composition bias toward polar residues; the sequence is DWASSSSEANSRCQTPTKQK. The CXC domain maps to 504-606; that stretch reads CRKIQLKKDN…CKVVSCKNCS (103 aa). Residues 613–728 enclose the SET domain; it reads KHLLLAPSDV…AGEELFFDYR (116 aa).

It belongs to the class V-like SAM-binding methyltransferase superfamily. Histone-lysine methyltransferase family. EZ subfamily. As to quaternary structure, component of the PRC2/EED-EZH1 complex, which includes EED, EZH1, SUZ12, RBBP4 and AEBP2. The PRC2/EED-EZH1 is less abundant than the PRC2/EED-EZH2 complex, has weak methyltransferase activity and compacts chromatin in the absence of the methyltransferase cofactor S-adenosyl-L-methionine (SAM). Interacts with EZHIP; the interaction blocks EZH1 methyltransferase activity.

It is found in the nucleus. The catalysed reaction is L-lysyl(27)-[histone H3] + 3 S-adenosyl-L-methionine = N(6),N(6),N(6)-trimethyl-L-lysyl(27)-[histone H3] + 3 S-adenosyl-L-homocysteine + 3 H(+). Polycomb group (PcG) protein. Catalytic subunit of the PRC2/EED-EZH1 complex, which methylates 'Lys-27' of histone H3, leading to transcriptional repression of the affected target gene. Able to mono-, di- and trimethylate 'Lys-27' of histone H3 to form H3K27me1, H3K27me2 and H3K27me3, respectively. Required for embryonic stem cell derivation and self-renewal, suggesting that it is involved in safeguarding embryonic stem cell identity. Compared to EZH2-containing complexes, it is less abundant in embryonic stem cells, has weak methyltransferase activity and plays a less critical role in forming H3K27me3, which is required for embryonic stem cell identity and proper differentiation. The sequence is that of Histone-lysine N-methyltransferase EZH1 (EZH1) from Bos taurus (Bovine).